A 330-amino-acid chain; its full sequence is Ferredoxin--NADP reductase (330 aa).

Thr-18, Glu-37, Gln-45, Tyr-50, Val-90, Phe-124, Asp-286, and Thr-327 together coordinate FAD.

This sequence belongs to the ferredoxin--NADP reductase type 2 family. Homodimer. FAD is required as a cofactor.

It carries out the reaction 2 reduced [2Fe-2S]-[ferredoxin] + NADP(+) + H(+) = 2 oxidized [2Fe-2S]-[ferredoxin] + NADPH. This chain is Ferredoxin--NADP reductase, found in Halalkalibacterium halodurans (strain ATCC BAA-125 / DSM 18197 / FERM 7344 / JCM 9153 / C-125) (Bacillus halodurans).